The sequence spans 311 residues: MKKIYIILLILFVILISLIGASILLVMSLSGENVDLFGGEKIAKVYLCNEIYFDYNQGDGIFPQQKKDARYYINLLDDLEKDDSVKGVLLVVNSPGGEVIASEKLARKVEELAKKKPVVVYVEGLDASGAYMVSAPADYIVAEKHSIVGSIGVRMDLMHYYGLMKKLGINVTTIKAGKYKDIGSPFRPMTKEEKEYLQKMINETYMDFVKWVAEHRHLSINYTLKIADGKIYSGEDAKKVGLVDEVGTEEDALKKLEQLANVSNPEIVEYGLEENKGLFGLTYYLGYGIGKGIGEVLYGMEKINGRVELLS.

Serine 128 (nucleophile) is an active-site residue. Lysine 180 acts as the Proton donor/acceptor in catalysis.

It belongs to the peptidase S49 family.

In Methanocaldococcus jannaschii (strain ATCC 43067 / DSM 2661 / JAL-1 / JCM 10045 / NBRC 100440) (Methanococcus jannaschii), this protein is Putative protease MJ0651.